Here is a 398-residue protein sequence, read N- to C-terminus: Probable aminomethyltransferase (398 aa).

It belongs to the GcvT family. In terms of assembly, the glycine cleavage system is composed of four proteins: P, T, L and H.

The enzyme catalyses N(6)-[(R)-S(8)-aminomethyldihydrolipoyl]-L-lysyl-[protein] + (6S)-5,6,7,8-tetrahydrofolate = N(6)-[(R)-dihydrolipoyl]-L-lysyl-[protein] + (6R)-5,10-methylene-5,6,7,8-tetrahydrofolate + NH4(+). Its function is as follows. The glycine cleavage system catalyzes the degradation of glycine. This chain is Probable aminomethyltransferase, found in Pyrococcus abyssi (strain GE5 / Orsay).